The chain runs to 203 residues: Ribosome hibernation promotion factor (203 aa).

It belongs to the HPF/YfiA ribosome-associated protein family. Long HPF subfamily. Interacts with 100S ribosomes.

It localises to the cytoplasm. In terms of biological role, required for dimerization of active 70S ribosomes into 100S ribosomes in stationary phase; 100S ribosomes are translationally inactive and sometimes present during exponential growth. This chain is Ribosome hibernation promotion factor, found in Bradyrhizobium diazoefficiens (strain JCM 10833 / BCRC 13528 / IAM 13628 / NBRC 14792 / USDA 110).